The primary structure comprises 474 residues: tRNA-2-methylthio-N(6)-dimethylallyladenosine synthase (474 aa).

The MTTase N-terminal domain occupies 3–120 (KKLHIKTWGC…LPEMLNHVQG (118 aa)). 6 residues coordinate [4Fe-4S] cluster: Cys-12, Cys-49, Cys-83, Cys-157, Cys-161, and Cys-164. The Radical SAM core domain maps to 143 to 375 (RAEGPTAFVS…QDRINQQVLQ (233 aa)). In terms of domain architecture, TRAM spans 378-441 (RRMLGTVQRI…TNSLRGTVVR (64 aa)).

This sequence belongs to the methylthiotransferase family. MiaB subfamily. In terms of assembly, monomer. It depends on [4Fe-4S] cluster as a cofactor.

It localises to the cytoplasm. The catalysed reaction is N(6)-dimethylallyladenosine(37) in tRNA + (sulfur carrier)-SH + AH2 + 2 S-adenosyl-L-methionine = 2-methylsulfanyl-N(6)-dimethylallyladenosine(37) in tRNA + (sulfur carrier)-H + 5'-deoxyadenosine + L-methionine + A + S-adenosyl-L-homocysteine + 2 H(+). Catalyzes the methylthiolation of N6-(dimethylallyl)adenosine (i(6)A), leading to the formation of 2-methylthio-N6-(dimethylallyl)adenosine (ms(2)i(6)A) at position 37 in tRNAs that read codons beginning with uridine. The protein is tRNA-2-methylthio-N(6)-dimethylallyladenosine synthase of Serratia proteamaculans (strain 568).